A 233-amino-acid chain; its full sequence is MAGLGFDETELRLGLPGAGELAARSSGKRGFAETIDLKLKLQPAAPAAVSGEEGAQEDKEDADAAAAAADEKMSMKRSASQSSVVTAEPDPDKPRAPKAQVVGWPPVRSFRKNVLAEKCKAAALVKVSMDGAPYLRKIDVAMYKSYPELSMAFQNMFTSFTIGKCGSHQQLKESNKLRDDLEYVPTYEDKDGDWMLVGDVPWEMFVESCKRLRIMKGSEAIGLAPRAVEKCKS.

2 disordered regions span residues 1–27 (MAGL…RSSG) and 46–100 (PAAV…PKAQ). The short motif at 11–15 (LRLGL) is the EAR-like (transcriptional repression) element. Residues 54–63 (GAQEDKEDAD) show a composition bias toward acidic residues. A PB1 domain is found at 122–217 (AALVKVSMDG…SCKRLRIMKG (96 aa)).

Belongs to the Aux/IAA family. Homodimers and heterodimers. As to expression, highly expressed in etiolated shoots. Expressed in roots.

The protein resides in the nucleus. In terms of biological role, aux/IAA proteins are short-lived transcriptional factors that function as repressors of early auxin response genes at low auxin concentrations. The protein is Auxin-responsive protein IAA11 (IAA11) of Oryza sativa subsp. japonica (Rice).